Reading from the N-terminus, the 3326-residue chain is Protein unc-80 homolog (3326 aa).

Polar residues predominate over residues 152-164 (IENQGSPGQPCRS). 4 disordered regions span residues 152 to 178 (IENQ…RKTF), 243 to 267 (KRSS…QQGE), 283 to 317 (PKAT…RASL), and 450 to 469 (RKED…GKRR). A Phosphoserine modification is found at serine 257. The segment covering 283-308 (PKATISGCHQGNSFDGSLSSQTSQER) has biased composition (polar residues). Serine 526 bears the Phosphoserine mark. Disordered regions lie at residues 536–560 (LSAR…SHGE), 697–785 (RKKS…DNIP), 967–1076 (GKKV…SRRI), 1405–1430 (EDSK…KKVP), and 1469–1516 (SSKL…LSNA). Basic and acidic residues-rich tracts occupy residues 551–560 (LPDHSNSHGE) and 699–713 (KSEN…KRPS). Residues 723-737 (SSSSTSGFGAPSASG) are compositionally biased toward low complexity. Residues 738 to 770 (AGDGGGEEGGGGDGGGGGGGGDGGGGGGGGGGP) show a composition bias toward gly residues. The span at 772 to 783 (EKNEKNQEKDDN) shows a compositional bias: basic and acidic residues. The span at 1038–1055 (SQSAASDTSSQSEQDTSE) shows a compositional bias: low complexity. Positions 1418–1429 (IKSDAGAEEKKV) are enriched in basic and acidic residues. The next 2 membrane-spanning stretches (helical) occupy residues 2336–2356 (PFVL…DAAN) and 2466–2486 (IAAT…VEVL). Residues 2493–2515 (PQMSRSDQGHKGTTTANHTMSSG) are disordered. 2 consecutive transmembrane segments (helical) span residues 2853–2873 (GLAE…LVCF) and 2899–2919 (LALW…FVLL). The segment covering 3010-3032 (NTGTGTVWEQDSEPSQQASQDTL) has biased composition (polar residues). The segment at 3010-3052 (NTGTGTVWEQDSEPSQQASQDTLSRTDEEDEENDSVSMPSVVS) is disordered. Serine 3110 carries the phosphoserine modification. Disordered stretches follow at residues 3122–3222 (LQQP…VLTS), 3236–3271 (PKQS…LSDP), and 3296–3326 (NGTE…ESHV). Residues 3127–3136 (GRKRGLRQLR) show a composition bias toward basic residues. Positions 3157-3168 (LSTTRRSIQPKT) are enriched in polar residues. Residues 3298-3309 (TENPLLSSQFTF) are compositionally biased toward polar residues. Residues 3315–3326 (GDTDSALDESHV) are compositionally biased toward acidic residues.

It belongs to the unc-80 family. In terms of assembly, NALCN complex consists of NALCN and auxiliary subunits, UNC79, UNC80 and NACL1. These auxiliary subunits are essential for the NALCN complex function. Interacts (via N-terminus half) with NALCN; this interaction facilitates NALCN surface localization. Interacts (via C-terminus) with UNC79. UNC80 bridges NALCN to UNC79. In terms of processing, phosphorylated on tyrosine residues. Expressed almost exclusively in the brain. Expressed in hippocampus and ventral tegmental area neurons.

It is found in the cell membrane. It localises to the cell projection. The protein localises to the dendrite. Its function is as follows. Auxiliary subunit of the NALCN sodium channel complex. The NALCN sodium channel complex is a voltage-gated ion channel responsible for the resting Na(+) permeability that controls neuronal excitability. This complex is activated by neuropeptides substance P, neurotensin. In addition, the channel is inhibited by extracellular Ca(2+) through the Ca(2+)-sensing receptor. UNC80 is essential for NALCN sensitivity to extracellular calcium. The polypeptide is Protein unc-80 homolog (Unc80) (Mus musculus (Mouse)).